Consider the following 60-residue polypeptide: Large ribosomal subunit protein uL30 (60 aa).

The protein belongs to the universal ribosomal protein uL30 family. Part of the 50S ribosomal subunit.

This chain is Large ribosomal subunit protein uL30, found in Flavobacterium johnsoniae (strain ATCC 17061 / DSM 2064 / JCM 8514 / BCRC 14874 / CCUG 350202 / NBRC 14942 / NCIMB 11054 / UW101) (Cytophaga johnsonae).